Reading from the N-terminus, the 816-residue chain is Lon protease (816 aa).

The Lon N-terminal domain maps to 40–244; it reads VPLIAVPSHP…KVLELLYEEL (205 aa). 398-405 contributes to the ATP binding site; sequence GPPGVGKT. The Lon proteolytic domain maps to 636 to 816; sequence AMSPGMVMGL…SMKEVIKLLF (181 aa). Catalysis depends on residues Ser724 and Lys767.

This sequence belongs to the peptidase S16 family. Homohexamer. Organized in a ring with a central cavity.

The protein resides in the cytoplasm. The enzyme catalyses Hydrolysis of proteins in presence of ATP.. In terms of biological role, ATP-dependent serine protease that mediates the selective degradation of mutant and abnormal proteins as well as certain short-lived regulatory proteins. Required for cellular homeostasis and for survival from DNA damage and developmental changes induced by stress. Degrades polypeptides processively to yield small peptide fragments that are 5 to 10 amino acids long. Binds to DNA in a double-stranded, site-specific manner. In Borrelia duttonii (strain Ly), this protein is Lon protease.